The sequence spans 180 residues: Magnetosome protein MamS (180 aa).

The Cytoplasmic portion of the chain corresponds to 1 to 21; sequence MDFRPDQVVARIRGAVEGALT. A helical transmembrane segment spans residues 22 to 42; sequence AQSVLGIGGALVLILVVIALL. Over 43-180 the chain is Lumenal; it reads PDRFTRGEGK…EGLALWMTVQ (138 aa).

It belongs to the magnetosome MamS family.

It localises to the magnetosome membrane. In terms of biological role, may play a role in magnetite crystal growth and size. The protein is Magnetosome protein MamS of Magnetospirillum gryphiswaldense (strain DSM 6361 / JCM 21280 / NBRC 15271 / MSR-1).